The following is a 338-amino-acid chain: MNLQRFPRYPLTFGPTPIQPLARLSKHLGGKVHLYAKREDCNSGLAFGGNKTRKLEYLIPEALAQGCDTLVSIGGIQSNQTRQVAAVAAHLGMKCVLVQENWVNYSDAVYDRVGNIQMSRILGADVRLVPDGFDIGFRRSWEDALESVRAAGGKPYAIPAGCSDHPLGGLGFVGFAEEVRAQEAELGFKFDYVVVCSVTGSTQAGMVVGFAADGRADRVIGVDASAKPAQTREQITRIARQTAEKVGLERDIMRADVVLDERFAGPEYGLPNEGTLEAIRLCARTEGMLTDPVYEGKSMHGMIEMVRNGEFPEGSRVLYAHLGGVPALNGYSFIFRDG.

Lysine 51 is subject to N6-(pyridoxal phosphate)lysine. The Nucleophile role is filled by serine 78.

This sequence belongs to the ACC deaminase/D-cysteine desulfhydrase family. In terms of assembly, homotrimer. Requires pyridoxal 5'-phosphate as cofactor.

The enzyme catalyses 1-aminocyclopropane-1-carboxylate + H2O = 2-oxobutanoate + NH4(+). Functionally, catalyzes a cyclopropane ring-opening reaction, the irreversible conversion of 1-aminocyclopropane-1-carboxylate (ACC) to ammonia and alpha-ketobutyrate. Allows growth on ACC as a nitrogen source. The protein is 1-aminocyclopropane-1-carboxylate deaminase of Pseudomonas sp. (strain ACP).